The chain runs to 345 residues: NADH-ubiquinone oxidoreductase chain 2 (345 aa).

The next 9 membrane-spanning stretches (helical) occupy residues 1–21 (MNPI…ILAM), 25–45 (HWVY…PIIS), 60–80 (FLIQ…NAYL), 113–133 (FWLP…IATW), 148–168 (LIPT…GGLG), 191–211 (VIII…YMIF), 239–259 (IITS…PMSG), 274–294 (HLTP…MFYL), and 324–344 (SSLS…PLLI).

Belongs to the complex I subunit 2 family.

Its subcellular location is the mitochondrion inner membrane. It carries out the reaction a ubiquinone + NADH + 5 H(+)(in) = a ubiquinol + NAD(+) + 4 H(+)(out). Functionally, core subunit of the mitochondrial membrane respiratory chain NADH dehydrogenase (Complex I) that is believed to belong to the minimal assembly required for catalysis. Complex I functions in the transfer of electrons from NADH to the respiratory chain. The immediate electron acceptor for the enzyme is believed to be ubiquinone. This is NADH-ubiquinone oxidoreductase chain 2 (MT-ND2) from Varanus baritji (Black-spotted ridge-tailed monitor).